The primary structure comprises 232 residues: Enolase-phosphatase E1 (232 aa).

It belongs to the HAD-like hydrolase superfamily. MasA/MtnC family. Monomer. Requires Mg(2+) as cofactor.

It carries out the reaction 5-methylsulfanyl-2,3-dioxopentyl phosphate + H2O = 1,2-dihydroxy-5-(methylsulfanyl)pent-1-en-3-one + phosphate. It participates in amino-acid biosynthesis; L-methionine biosynthesis via salvage pathway; L-methionine from S-methyl-5-thio-alpha-D-ribose 1-phosphate: step 3/6. Its pathway is amino-acid biosynthesis; L-methionine biosynthesis via salvage pathway; L-methionine from S-methyl-5-thio-alpha-D-ribose 1-phosphate: step 4/6. Functionally, bifunctional enzyme that catalyzes the enolization of 2,3-diketo-5-methylthiopentyl-1-phosphate (DK-MTP-1-P) into the intermediate 2-hydroxy-3-keto-5-methylthiopentenyl-1-phosphate (HK-MTPenyl-1-P), which is then dephosphorylated to form the acireductone 1,2-dihydroxy-3-keto-5-methylthiopentene (DHK-MTPene). The protein is Enolase-phosphatase E1 of Xanthomonas oryzae pv. oryzae (strain KACC10331 / KXO85).